Here is a 946-residue protein sequence, read N- to C-terminus: Leucine--tRNA ligase (946 aa).

The 'HIGH' region signature appears at 43–53 (PYPNGTIHIGH). The 'KMSKS' region motif lies at 638–642 (KMSKS). Residue Lys641 coordinates ATP.

Belongs to the class-I aminoacyl-tRNA synthetase family.

The protein localises to the cytoplasm. The catalysed reaction is tRNA(Leu) + L-leucine + ATP = L-leucyl-tRNA(Leu) + AMP + diphosphate. The protein is Leucine--tRNA ligase of Pyrobaculum calidifontis (strain DSM 21063 / JCM 11548 / VA1).